The following is a 181-amino-acid chain: 3-isopropylmalate dehydratase small subunit (181 aa).

This sequence belongs to the LeuD family. LeuD type 2 subfamily. In terms of assembly, heterodimer of LeuC and LeuD.

The enzyme catalyses (2R,3S)-3-isopropylmalate = (2S)-2-isopropylmalate. Its pathway is amino-acid biosynthesis; L-leucine biosynthesis; L-leucine from 3-methyl-2-oxobutanoate: step 2/4. Catalyzes the isomerization between 2-isopropylmalate and 3-isopropylmalate, via the formation of 2-isopropylmaleate. This chain is 3-isopropylmalate dehydratase small subunit, found in Deinococcus deserti (strain DSM 17065 / CIP 109153 / LMG 22923 / VCD115).